Here is a 477-residue protein sequence, read N- to C-terminus: Putative 4-(hydroxymethyl)benzenesulfonate dehydrogenase TsaD2 (477 aa).

NAD(+)-binding positions include Trp154 to Asn155, Lys178 to Glu181, and Gly230 to Ser231. Residue Glu252 is the Proton acceptor of the active site. Leu253 lines the NAD(+) pocket. The active-site Nucleophile is the Cys286. Glu381 is an NAD(+) binding site.

It belongs to the aldehyde dehydrogenase family. As to quaternary structure, homodimer.

The enzyme catalyses 4-(hydroxymethyl)benzenesulfonate + NAD(+) = 4-formylbenzenesulfonate + NADH + H(+). Its function is as follows. Involved in the toluene-4-sulfonate degradation pathway. Does not discriminate between the sulfonate and the carboxyl substituents and can also be involved in the p-toluenecarboxylate degradation pathway. This is Putative 4-(hydroxymethyl)benzenesulfonate dehydrogenase TsaD2 (tsaD2) from Comamonas testosteroni (Pseudomonas testosteroni).